The primary structure comprises 269 residues: MNTIPRYAVFGNPVAHSKSPQIHRQFALQEGVEIEYERICADIGGFAQAVEAFFANGGRGANVTVPFKQEAFALSDEHSERALAAGAVNTLILLENGKIRGDNTDGLGLTDDIAKRLGVEISDKTVLLLGAGGAVRGVIPVLKEYHPARIVIANRTHAKAAEMAVHFDIDAVPLDELEGGFDIIINGTSGGLSGQLPAVSPKIFEHCTLAYDMVYGEAAEPFLAFARQSGAKQTADGLGMLVGQAAASYRLWRGFAPDVLPVVQYMREL.

Shikimate is bound by residues 17 to 19 and Thr64; that span reads SKS. The active-site Proton acceptor is the Lys68. Glu80 contacts NADP(+). Residues Asn89 and Asp105 each contribute to the shikimate site. NADP(+) is bound by residues 130–134, 154–159, and Met213; these read GAGGA and NRTHAK. Tyr215 serves as a coordination point for shikimate. Gly237 serves as a coordination point for NADP(+).

This sequence belongs to the shikimate dehydrogenase family. Homodimer.

The enzyme catalyses shikimate + NADP(+) = 3-dehydroshikimate + NADPH + H(+). The protein operates within metabolic intermediate biosynthesis; chorismate biosynthesis; chorismate from D-erythrose 4-phosphate and phosphoenolpyruvate: step 4/7. Involved in the biosynthesis of the chorismate, which leads to the biosynthesis of aromatic amino acids. Catalyzes the reversible NADPH linked reduction of 3-dehydroshikimate (DHSA) to yield shikimate (SA). This is Shikimate dehydrogenase (NADP(+)) from Neisseria pharyngis.